The primary structure comprises 735 residues: Disintegrin and metalloproteinase domain-containing protein 2 (735 aa).

Positions 1–18 (MWLILLLLSGLSELGGLS) are cleaved as a signal peptide. A propeptide spanning residues 19–180 (QSQTEGTREK…YKIRSIKPQR (162 aa)) is cleaved from the precursor. Residues 19–686 (QSQTEGTREK…ASAYRSKSPR (668 aa)) are Extracellular-facing. 3 N-linked (GlcNAc...) asparagine glycosylation sites follow: Asn-128, Asn-226, and Asn-279. The Peptidase M12B domain maps to 184–381 (HYLEIHIVVE…QSSHCLQNQP (198 aa)). 4 cysteine pairs are disulfide-bonded: Cys-293-Cys-376, Cys-335-Cys-360, Cys-337-Cys-342, and Cys-449-Cys-469. Residues Asn-359, Asn-463, Asn-489, Asn-569, and Asn-585 are each glycosylated (N-linked (GlcNAc...) asparagine). The region spanning 389–476 (MAVCGNGEVE…EVCEDFFVQN (88 aa)) is the Disintegrin domain. The EGF-like domain occupies 615 to 648 (LGYDCNLEKCNHHGVCNNKKNCHCDPTYLPPDCK). Intrachain disulfides connect Cys-619–Cys-630, Cys-624–Cys-636, and Cys-638–Cys-647. The chain crosses the membrane as a helical span at residues 687–707 (WPFFLIIPFYVVILVLIGMLV). Topologically, residues 708–735 (KVYSQRMKWRMDDFSSEEQFESESESKD) are cytoplasmic. Ser-729 bears the Phosphoserine mark.

As to quaternary structure, heterodimer with ADAM1/fertilin subunit alpha. In terms of processing, the signal and the metalloprotease domain are cleaved during the epididymal maturation of the spermatozoa. Expressed in the testis and testicular sperm (at protein level).

The protein resides in the membrane. Its function is as follows. Sperm surface membrane protein that may be involved in sperm-egg plasma membrane adhesion and fusion during fertilization. Could have a direct role in sperm-zona binding or migration of sperm from the uterus into the oviduct. Interactions with egg membrane could be mediated via binding between its disintegrin-like domain to one or more integrins receptors on the egg. This is a non catalytic metalloprotease-like protein. This chain is Disintegrin and metalloproteinase domain-containing protein 2, found in Mus musculus (Mouse).